The primary structure comprises 243 residues: UPF0246 protein spyM18_2163 (243 aa).

It belongs to the UPF0246 family.

This chain is UPF0246 protein spyM18_2163, found in Streptococcus pyogenes serotype M18 (strain MGAS8232).